A 600-amino-acid chain; its full sequence is Mediator of RNA polymerase II transcription subunit 26 (600 aa).

The TFIIS N-terminal domain occupies 10–87 (QIRDRLLQAI…RSWQKLIEPA (78 aa)). Disordered regions lie at residues 99 to 330 (GATG…RRLE), 348 to 402 (HQRL…PRDY), and 431 to 461 (TRQI…ELDK). Residues 123–133 (SIHDLKSRNDL) show a composition bias toward basic and acidic residues. A compositionally biased stretch (polar residues) spans 175–197 (PNSSPLPTNGISGSPESFASSLD). Over residues 207–218 (SRLERDENDKHS) the composition is skewed to basic and acidic residues. A compositionally biased stretch (pro residues) spans 314 to 324 (SPLPLAQPSTP). Residues 441 to 461 (EPVRADSPVHMEQQSRTELDK) show a composition bias toward basic and acidic residues. Ser447, Ser470, and Ser535 each carry phosphoserine.

The protein belongs to the Mediator complex subunit 26 family. Component of the Mediator complex, which is composed of MED1, MED4, MED6, MED7, MED8, MED9, MED10, MED11, MED12, MED13, MED13L, MED14, MED15, MED16, MED17, MED18, MED19, MED20, MED21, MED22, MED23, MED24, MED25, MED26, MED27, MED29, MED30, MED31, CCNC, CDK8 and CDC2L6/CDK11. The MED12, MED13, CCNC and CDK8 subunits form a distinct module termed the CDK8 module. Mediator containing the CDK8 module is less active than Mediator lacking this module in supporting transcriptional activation. Individual preparations of the Mediator complex lacking one or more distinct subunits have been variously termed ARC, CRSP, DRIP, PC2, SMCC and TRAP. Interacts with CEBPB (when not methylated).

It is found in the nucleus. Its function is as follows. Component of the Mediator complex, a coactivator involved in the regulated transcription of nearly all RNA polymerase II-dependent genes. Mediator functions as a bridge to convey information from gene-specific regulatory proteins to the basal RNA polymerase II transcription machinery. Mediator is recruited to promoters by direct interactions with regulatory proteins and serves as a scaffold for the assembly of a functional pre-initiation complex with RNA polymerase II and the general transcription factors. This Homo sapiens (Human) protein is Mediator of RNA polymerase II transcription subunit 26 (MED26).